A 327-amino-acid polypeptide reads, in one-letter code: GDP-mannose transporter (327 aa).

Over 1-4 (MESS) the chain is Cytoplasmic. A helical membrane pass occupies residues 5 to 25 (LAAIANSGPISIFSYCVSSIL). Residues 26–36 (MTVTNKYVLSG) lie on the Lumenal side of the membrane. The helical transmembrane segment at 37-57 (FSFNMNFLLLAVQSIVCIVTI) threads the bilayer. Residues 58-78 (GSLKSFGVITYRQFNKEEARK) lie on the Cytoplasmic side of the membrane. The chain crosses the membrane as a helical span at residues 79-93 (WSPIAVLLVIMIYTS). Over 94–102 (SKALQYLSI) the chain is Lumenal. The helical transmembrane segment at 103–125 (PVYTIFKNLTIILIAYGEVLWFG) threads the bilayer. At 126 to 131 (GKVTTM) the chain is on the cytoplasmic side. The chain crosses the membrane as a helical span at residues 132-149 (ALSSFLLMVFSSVVAWYG). Residues 150-163 (DEAVSGSGNESFIA) are Lumenal-facing. N158 carries an N-linked (GlcNAc...) asparagine glycan. Residues 164 to 184 (LYLGYFWMATNCFASAAFVLI) traverse the membrane as a helical segment. At 185–207 (MRKRIKLTNFKDFDTMYYNNLLS) the chain is on the cytoplasmic side. Residues 208 to 228 (IPILLASSIIFEDWSAENLAV) form a helical membrane-spanning segment. Topologically, residues 229-238 (NFPSDNRTAT) are lumenal. N-linked (GlcNAc...) asparagine glycosylation is present at N234. Residues 239–259 (IAAMVLSGASSVGISYCSAWC) form a helical membrane-spanning segment. At 260 to 266 (VRVTSST) the chain is on the cytoplasmic side. The chain crosses the membrane as a helical span at residues 267 to 289 (TYSMVGALNKLPIALSGLVFFPA). Residues 290 to 292 (AVN) lie on the Lumenal side of the membrane. Residues 293-312 (FWSVASIFVGFAAGLVYAVA) traverse the membrane as a helical segment. At 313-327 (KQRQQKENVSLPSSK) the chain is on the cytoplasmic side.

This sequence belongs to the TPT transporter family. SLC35D subfamily. As to quaternary structure, homooligomer.

Its subcellular location is the golgi apparatus membrane. It is found in the cytoplasmic vesicle membrane. It localises to the endoplasmic reticulum membrane. Involved in the import of GDP-mannose from the cytoplasm into the Golgi lumen. The polypeptide is GDP-mannose transporter (VRG4) (Scheffersomyces stipitis (strain ATCC 58785 / CBS 6054 / NBRC 10063 / NRRL Y-11545) (Yeast)).